The sequence spans 318 residues: Death effector domain-containing protein (318 aa).

Residues 25 to 103 form the DED domain; sequence SLHRMFDIVG…RHDLLPYVTL (79 aa). Disordered stretches follow at residues 128–147 and 160–191; these read PRAL…TVPP and QMCS…KEKQ.

As to quaternary structure, interacts with CASP8, CASP10, KRT8, KRT18, CASP3 and FADD. Homodimerizes and heterodimerizes with DEDD2. In terms of processing, exists predominantly in a mono- or diubiquitinated form. Widely expressed with highest levels in testis.

It is found in the cytoplasm. The protein localises to the nucleus. Its subcellular location is the nucleolus. Functionally, a scaffold protein that directs CASP3 to certain substrates and facilitates their ordered degradation during apoptosis. May also play a role in mediating CASP3 cleavage of KRT18. Regulates degradation of intermediate filaments during apoptosis. May play a role in the general transcription machinery in the nucleus and might be an important regulator of the activity of GTF3C3. Inhibits DNA transcription in vitro. This chain is Death effector domain-containing protein (DEDD), found in Homo sapiens (Human).